A 159-amino-acid polypeptide reads, in one-letter code: MQKRAIYPGTFDPITNGHIDIVTRATQMFDHVILAIAASPSKKTMFTLEERVELAQQATAHLGNVEVVGFSDLMANFARNQHATVLIRGLRAVADFEYEMQLAHMNRHLMPELESVFLMPSKEWSFISSSLVKEVARHQGDVTHFLPENVYQALMAKLA.

Position 10 (Thr10) interacts with substrate. ATP-binding positions include 10–11 and His18; that span reads TF. The substrate site is built by Lys42, Met74, and Arg88. ATP contacts are provided by residues 89–91, Glu99, and 124–130; these read GLR and WSFISSS.

The protein belongs to the bacterial CoaD family. As to quaternary structure, homohexamer. Mg(2+) serves as cofactor.

It is found in the cytoplasm. The enzyme catalyses (R)-4'-phosphopantetheine + ATP + H(+) = 3'-dephospho-CoA + diphosphate. It participates in cofactor biosynthesis; coenzyme A biosynthesis; CoA from (R)-pantothenate: step 4/5. Functionally, reversibly transfers an adenylyl group from ATP to 4'-phosphopantetheine, yielding dephospho-CoA (dPCoA) and pyrophosphate. This Shigella dysenteriae serotype 1 (strain Sd197) protein is Phosphopantetheine adenylyltransferase.